The following is a 346-amino-acid chain: MNPHATPVLVLSLALGTTITISSNHWVLAWTGLEINTLAIIPLISKSHHPRAVEAATKYFLTQAAASALVLFSSMTNAWATGQWDITQLNHPTSCLLLTAAIAIKLGLVPFHFWFPEVLQGSPLMTALLLSTLMKFPPLTLLLMTSKSLNPALLTAMALASAALGGWMGLNQTQTRKILAFSSISHLGWIAIILVYSPKLALLTFYLYTIMTSAVFMALNKIKALNLSMVLTSWTKTPVLNATLMLVLLSLAGLPPLTGFMPKWLIIQELTKQEMTPAAMAIAMLSLLSLFFYLRLAYHSTITLPPNSSNHMKQWYTSKPPSTPTAILASLSILLLPLSPMIHAIV.

11 consecutive transmembrane segments (helical) span residues 1–21 (MNPH…TITI), 25–45 (HWVL…PLIS), 60–80 (FLTQ…NAWA), 95–115 (CLLL…HFWF), 124–144 (LMTA…LLLM), 149–169 (LNPA…GWMG), 178–195 (ILAF…IILV), 200–219 (LALL…FMAL), 242–262 (ATLM…GFMP), 274–294 (EMTP…FFYL), and 326–346 (AILA…HAIV).

The protein belongs to the complex I subunit 2 family.

It localises to the mitochondrion inner membrane. It carries out the reaction a ubiquinone + NADH + 5 H(+)(in) = a ubiquinol + NAD(+) + 4 H(+)(out). Core subunit of the mitochondrial membrane respiratory chain NADH dehydrogenase (Complex I) that is believed to belong to the minimal assembly required for catalysis. Complex I functions in the transfer of electrons from NADH to the respiratory chain. The immediate electron acceptor for the enzyme is believed to be ubiquinone. This chain is NADH-ubiquinone oxidoreductase chain 2 (MT-ND2), found in Anas acuta (Northern pintail).